A 139-amino-acid polypeptide reads, in one-letter code: 2S seed storage albumin protein (139 aa).

An N-terminal signal peptide occupies residues 1 to 15; it reads AALLVALLFVANAAA. 11 igE-binding regions span residues 16–30, 29–34, 64–78, 65–73, 95–103, 99–111, 102–114, 105–117, 112–126, 125–136, and 125–139; these read FRTT…EDID, IDNPRR, GYDE…RQCC, YDEDNQRQH, QVVRRQQQQ, RQQQ…GEEM, QQQG…MEEM, GLRG…MVQS, EEMV…NECG, CGISSQRCEIRR, and CGIS…RSWF. 2 propeptides span residues 16-31 and 58-71; these read FRTT…DIDN and QQSR…DNQR. Intrachain disulfides connect Cys39–Cys88, Cys52–Cys77, Cys78–Cys125, and Cys90–Cys132. The segment at 104-115 is immunodominant epitope. IgE-binding; binds to IgE in 75% of the 20 walnut-allergic patients tested; it reads QGLRGEEMEEMV. The tract at residues 107-110 is minimally required for IgE-binding by the immunodominant epitope; that stretch reads RGEE. Positions 136-139 are excised as a propeptide; the sequence is RSWF.

Belongs to the 2S seed storage albumins family. In terms of assembly, the mature protein consists of a small chain and a large chain linked by disulfide bonds. As to expression, expressed in seed (at protein level). Expressed in the peel of mature seed.

Seed storage protein. The polypeptide is 2S seed storage albumin protein (Juglans regia (English walnut)).